A 201-amino-acid chain; its full sequence is Probable molybdenum cofactor guanylyltransferase (201 aa).

GTP-binding positions include 6–8 (LAG), Lys-18, Asp-65, and Asp-97. Position 97 (Asp-97) interacts with Mg(2+).

It belongs to the MobA family. It depends on Mg(2+) as a cofactor.

It is found in the cytoplasm. It carries out the reaction Mo-molybdopterin + GTP + H(+) = Mo-molybdopterin guanine dinucleotide + diphosphate. Its function is as follows. Transfers a GMP moiety from GTP to Mo-molybdopterin (Mo-MPT) cofactor (Moco or molybdenum cofactor) to form Mo-molybdopterin guanine dinucleotide (Mo-MGD) cofactor. The protein is Probable molybdenum cofactor guanylyltransferase of Staphylococcus epidermidis (strain ATCC 35984 / DSM 28319 / BCRC 17069 / CCUG 31568 / BM 3577 / RP62A).